The chain runs to 120 residues: NAD(P)H-quinone oxidoreductase subunit 3 (120 aa).

A run of 3 helical transmembrane segments spans residues 10–30, 64–84, and 89–109; these read FLGFLLIAAAVPVLALVTNLI, MFALVFVIFDVETVFLYPWAV, and LGLLAFIEALIFIAILVIALA.

Belongs to the complex I subunit 3 family. In terms of assembly, NDH-1 can be composed of about 15 different subunits; different subcomplexes with different compositions have been identified which probably have different functions.

The protein resides in the cellular thylakoid membrane. It carries out the reaction a plastoquinone + NADH + (n+1) H(+)(in) = a plastoquinol + NAD(+) + n H(+)(out). The catalysed reaction is a plastoquinone + NADPH + (n+1) H(+)(in) = a plastoquinol + NADP(+) + n H(+)(out). In terms of biological role, NDH-1 shuttles electrons from an unknown electron donor, via FMN and iron-sulfur (Fe-S) centers, to quinones in the respiratory and/or the photosynthetic chain. The immediate electron acceptor for the enzyme in this species is believed to be plastoquinone. Couples the redox reaction to proton translocation, and thus conserves the redox energy in a proton gradient. Cyanobacterial NDH-1 also plays a role in inorganic carbon-concentration. This chain is NAD(P)H-quinone oxidoreductase subunit 3, found in Prochlorococcus marinus (strain MIT 9301).